The sequence spans 3646 residues: Platelet adherence protein A (3646 aa).

The N-terminal stretch at 1–33 (MKDFLKKVLILFTVLLMSMPSSVLNLGTSVVRA) is a signal peptide. The interval 34 to 359 (DDPLNIETRR…KNVSFYVNEQ (326 aa)) is does not bind platelets. Positions 34–690 (DDPLNIETRR…NQDAHAKTKD (657 aa)) are F2, binds platelets, fibronectin, vitronectin, salivary pellicle, causes ADP secretion by dense granules. Residues 34–1328 (DDPLNIETRR…KFVLSDTLEE (1295 aa)) are binds platelets. The VWFA domain maps to 75–373 (DLVILQDASG…VFSQKILESV (299 aa)). The short motif at 214–216 (NGR) is the Integrin-like recognition motif NGR element. Positions 416–418 (RGT) match the Integrin-like recognition motif RGT motif. Residues 439 to 466 (KNSFDYDLSKEARAPETDEDSEVDPPEN) are disordered. The segment covering 445 to 454 (DLSKEARAPE) has biased composition (basic and acidic residues). The Integrin-like recognition motif AGD signature appears at 485–487 (AGD). A central region with RrgB repeats region spans residues 709–3205 (TEVDKKVNEK…TVPNKATIAF (2497 aa)). Composition is skewed to basic and acidic residues over residues 1124-1135 (KDKNDHKGEKET) and 1563-1573 (DHNPKFHKDSN). Disordered stretches follow at residues 1124-1153 (KDKNDHKGEKETIPVTVTPPTEPNVSKKIN), 1563-1589 (DHNPKFHKDSNEVPVTPPSPEQPPIEK), 2011-2036 (FNNDPGTEQSSKPVPVIPPTPTEPEL), 2170-2198 (EKDSNIVPVTPPSPENPPVEKKVNNKPSA), 2320-2343 (KTEKSTEPVPVIPPSPEEPGIKKE), 2467-2492 (PNRPEIHKDSNRVPVTPPTPEEPEIK), 2611-2644 (ASYRVDFPNNPGVTKDSNEVPVTPPSPENPPIEK), 2767-2792 (FNNDPGTEQSSKPVPVIPPTPTEPEL), 2916-2948 (PNKPAVTKDSNEVPVTPPSPEQPPIEKDVNSKP), 3202-3252 (TIAF…NPST), 3371-3412 (AAAK…AALE), and 3550-3618 (NDKP…PKTG). A compositionally biased stretch (polar residues) spans 2011–2022 (FNNDPGTEQSSK). Residues 2767-2778 (FNNDPGTEQSSK) are compositionally biased toward polar residues. The segment covering 3210-3220 (GKNGTKESNPV) has biased composition (polar residues). The span at 3223-3237 (RPRDPEKPEEPKPNE) shows a compositional bias: basic and acidic residues. Coiled coils occupy residues 3326-3376 (IAKI…AKEK) and 3408-3475 (VAAL…VNDK). The segment covering 3371–3406 (AAAKEKAAAAPATPAPASDSDAGNATATPAPADNNA) has biased composition (low complexity). The segment covering 3550 to 3560 (NDKPKVTNTVN) has biased composition (polar residues). Positions 3563 to 3605 (PPEPTTPPQTPPHTPPTTPGTPPPTTPDTPPAPKGDLPPAPTP) are enriched in pro residues. The LPXTG sorting signal signature appears at 3614–3618 (LPKTG). Threonine 3617 bears the Pentaglycyl murein peptidoglycan amidated threonine mark. Residues 3618 to 3646 (GTSATMVNEVIIGMILVLMGLLLRRKPKH) constitute a propeptide, removed by sortase.

It localises to the secreted. The protein localises to the cell wall. With respect to regulation, whole bacterial adhesion to Chinese hamster ovary cells expressing GPIIbIIIa is abrogated by integrin inhibitor RGDS and GPIIbIIIa inhibitor Abciximab. Functionally, a cell wall protein involved with Hsa in host cell interactions required for colonization and pathogenesis. Involved in recognition of platelets. Interacts with human platelet integrin receptor GPIIbIIIa (a complex of ITGA2B and ITGB3). Involved in platelet spreading, presumably by activation of outside-in signaling leading to platelet activation and then spreading. Spreading also involves GPIIbIIIa. Binding to platelets under static conditions causes platelet dense granules to secrete ADP (similar to release induced by fibrinogen binding), has no effect on platelet alpha granule release. The N-terminal 656 aa residue fragment (called F2) also binds platelets, causes dense granule secretion and allows platelet spreading. Acts in concert with Hsa to promote binding to human fibronectin (FN1) and vitronectin (VTN), and biofilm formation. F2 bind activated platelets more strongly than unactivated platelets. Binding to both FN1 and VTN is mediated at least in part by their glycosylation. This is Platelet adherence protein A from Streptococcus gordonii (strain Challis / ATCC 35105 / BCRC 15272 / CH1 / DL1 / V288).